The sequence spans 418 residues: Putative ion-transport protein YfeO (418 aa).

12 helical membrane passes run 10-30, 54-74, 99-119, 120-140, 149-169, 186-206, 223-243, 258-278, 300-320, 322-342, 343-363, and 386-406; these read LLLS…LIVV, DSPF…GLVI, ALPG…SLGP, EHPI…RLLP, ILAS…AALI, LFAP…FFHP, ILSG…AVWC, VLML…AGPV, DYFL…ASGF, GGRI…LHEH, VPAV…VLVV, and LLCI…IMMV.

The protein belongs to the chloride channel (TC 2.A.49) family.

The protein resides in the cell membrane. This Escherichia fergusonii (strain ATCC 35469 / DSM 13698 / CCUG 18766 / IAM 14443 / JCM 21226 / LMG 7866 / NBRC 102419 / NCTC 12128 / CDC 0568-73) protein is Putative ion-transport protein YfeO.